Here is a 400-residue protein sequence, read N- to C-terminus: S-adenosylmethionine synthase (400 aa).

136–141 (GQGSVD) is an ATP binding site.

It belongs to the AdoMet synthase 2 family. Requires Mg(2+) as cofactor.

It carries out the reaction L-methionine + ATP + H2O = S-adenosyl-L-methionine + phosphate + diphosphate. The protein operates within amino-acid biosynthesis; S-adenosyl-L-methionine biosynthesis; S-adenosyl-L-methionine from L-methionine: step 1/1. Catalyzes the formation of S-adenosylmethionine from methionine and ATP. The polypeptide is S-adenosylmethionine synthase (Thermoplasma volcanium (strain ATCC 51530 / DSM 4299 / JCM 9571 / NBRC 15438 / GSS1)).